A 213-amino-acid polypeptide reads, in one-letter code: Phosphatidylcholine transfer protein (213 aa).

M1 carries the post-translational modification N-acetylmethionine. The START domain occupies 1 to 212 (MDPGAGAFSE…MVKACQNYKK (212 aa)). A 1,2-diacyl-sn-glycero-3-phosphocholine contacts are provided by Y72 and R78. S139 is subject to Phosphoserine. Residue Q157 coordinates a 1,2-diacyl-sn-glycero-3-phosphocholine. The part of the binding site for phosphatidylcholine stretch occupies residues 171–176 (VFMYYF).

Interacts with ACOT13/THEM2.

The protein localises to the cytoplasm. Catalyzes the transfer of phosphatidylcholine between membranes. Binds phosphatidylcholine in a tight 1:1 stoichiometric complex. The polypeptide is Phosphatidylcholine transfer protein (PCTP) (Bos taurus (Bovine)).